The sequence spans 434 residues: Enolase (434 aa).

Gln-163 contacts (2R)-2-phosphoglycerate. Catalysis depends on Glu-205, which acts as the Proton donor. Mg(2+) is bound by residues Asp-242, Glu-291, and Asp-318. The (2R)-2-phosphoglycerate site is built by Lys-343, Arg-372, Ser-373, and Lys-394. Catalysis depends on Lys-343, which acts as the Proton acceptor.

This sequence belongs to the enolase family. Requires Mg(2+) as cofactor.

It is found in the cytoplasm. It localises to the secreted. The protein resides in the cell surface. It catalyses the reaction (2R)-2-phosphoglycerate = phosphoenolpyruvate + H2O. It functions in the pathway carbohydrate degradation; glycolysis; pyruvate from D-glyceraldehyde 3-phosphate: step 4/5. Its function is as follows. Catalyzes the reversible conversion of 2-phosphoglycerate (2-PG) into phosphoenolpyruvate (PEP). It is essential for the degradation of carbohydrates via glycolysis. The chain is Enolase from Streptococcus thermophilus (strain ATCC BAA-491 / LMD-9).